We begin with the raw amino-acid sequence, 192 residues long: Ion-translocating oxidoreductase complex subunit A (192 aa).

The next 6 helical transmembrane spans lie at L5–L25, I39–V59, L65–V85, A102–L122, A134–M154, and A171–V191.

The protein belongs to the NqrDE/RnfAE family. The complex is composed of six subunits: RnfA, RnfB, RnfC, RnfD, RnfE and RnfG.

The protein localises to the cell inner membrane. In terms of biological role, part of a membrane-bound complex that couples electron transfer with translocation of ions across the membrane. This is Ion-translocating oxidoreductase complex subunit A from Shewanella sediminis (strain HAW-EB3).